The primary structure comprises 96 residues: Putative pterin-4-alpha-carbinolamine dehydratase (96 aa).

Belongs to the pterin-4-alpha-carbinolamine dehydratase family.

The enzyme catalyses (4aS,6R)-4a-hydroxy-L-erythro-5,6,7,8-tetrahydrobiopterin = (6R)-L-erythro-6,7-dihydrobiopterin + H2O. The chain is Putative pterin-4-alpha-carbinolamine dehydratase from Prochlorococcus marinus (strain MIT 9515).